Consider the following 445-residue polypeptide: Tyrosine--tRNA ligase, mitochondrial (445 aa).

Residue Tyr-33 participates in L-tyrosine binding. Residue Asp-37 coordinates ATP. The 'HIGH' region signature appears at 38–47 (PTAASLHVGN). The L-tyrosine site is built by Asp-77, Tyr-184, Gln-188, Asp-191, and Gln-210. Positions 245–249 (KLGKS) match the 'KMSKS' region motif. ATP is bound at residue Lys-248. Positions 384-445 (QPFSRLLRTL…GKRTFVLDSL (62 aa)) constitute an S4 RNA-binding domain.

The protein belongs to the class-I aminoacyl-tRNA synthetase family. In terms of assembly, homodimer.

Its subcellular location is the mitochondrion matrix. The enzyme catalyses tRNA(Tyr) + L-tyrosine + ATP = L-tyrosyl-tRNA(Tyr) + AMP + diphosphate + H(+). Functionally, catalyzes the attachment of tyrosine to tRNA(Tyr) in a two-step reaction: tyrosine is first activated by ATP to form Tyr-AMP and then transferred to the acceptor end of tRNA(Tyr). This Schizosaccharomyces pombe (strain 972 / ATCC 24843) (Fission yeast) protein is Tyrosine--tRNA ligase, mitochondrial.